The following is a 213-amino-acid chain: MTTTTSDLTVLRAGTLDYEAAWEEQRRLHESVVTDKHGDAVLLLEHPSVYTAGKRTEPWDRPMDGTPVIDVDRGGKITWHGPGQLVGYPILRLPDPVDVVAYVRRVEQMLIDVCAEFGLVAGRIEGRSGVWVPADDRGPARKVAAIGIRVARGVTLHGFSLNCDCDLTYYDRIVPCGIRDAGVTSLAAELGRPVTVADALPVVERHLPTLVGA.

Positions 35-213 (DKHGDAVLLL…ERHLPTLVGA (179 aa)) constitute a BPL/LPL catalytic domain. Substrate contacts are provided by residues 73–80 (RGGKITWH), 145–147 (AIG), and 158–160 (GFS). Cys-176 acts as the Acyl-thioester intermediate in catalysis.

This sequence belongs to the LipB family.

Its subcellular location is the cytoplasm. The enzyme catalyses octanoyl-[ACP] + L-lysyl-[protein] = N(6)-octanoyl-L-lysyl-[protein] + holo-[ACP] + H(+). It functions in the pathway protein modification; protein lipoylation via endogenous pathway; protein N(6)-(lipoyl)lysine from octanoyl-[acyl-carrier-protein]: step 1/2. Catalyzes the transfer of endogenously produced octanoic acid from octanoyl-acyl-carrier-protein onto the lipoyl domains of lipoate-dependent enzymes. Lipoyl-ACP can also act as a substrate although octanoyl-ACP is likely to be the physiological substrate. This Salinispora arenicola (strain CNS-205) protein is Octanoyltransferase.